A 299-amino-acid polypeptide reads, in one-letter code: Proline iminopeptidase (299 aa).

The AB hydrolase-1 domain occupies 26 to 272 (VLLLAGGPGF…QFLYCANGSH (247 aa)). Ser103 acts as the Nucleophile in catalysis. The active site involves Asp245. The Proton donor role is filled by His272.

This sequence belongs to the peptidase S33 family. As to quaternary structure, monomer.

It carries out the reaction Release of N-terminal proline from a peptide.. Its function is as follows. Releases the N-terminal proline from various substrates. The protein is Proline iminopeptidase of Chitinophaga pinensis (strain ATCC 43595 / DSM 2588 / LMG 13176 / NBRC 15968 / NCIMB 11800 / UQM 2034).